Reading from the N-terminus, the 95-residue chain is Acylphosphatase (95 aa).

The region spanning 10–95 is the Acylphosphatase-like domain; the sequence is CIHATVSGKV…VEDYSDFRVR (86 aa). Residues Arg-25 and Asn-43 contribute to the active site.

This sequence belongs to the acylphosphatase family.

It carries out the reaction an acyl phosphate + H2O = a carboxylate + phosphate + H(+). This Coxiella burnetii (strain Dugway 5J108-111) protein is Acylphosphatase (acyP).